Reading from the N-terminus, the 67-residue chain is VAETHDHRVSEIISKKFDVVLAGGITFENVRKIVNSVKPVGIDVSSGVELNNRKNELLIKKICHNLI.

Belongs to the TrpF family.

It catalyses the reaction N-(5-phospho-beta-D-ribosyl)anthranilate = 1-(2-carboxyphenylamino)-1-deoxy-D-ribulose 5-phosphate. Its pathway is amino-acid biosynthesis; L-tryptophan biosynthesis; L-tryptophan from chorismate: step 3/5. This chain is N-(5'-phosphoribosyl)anthranilate isomerase (trpF), found in Methanococcus voltae.